Here is a 375-residue protein sequence, read N- to C-terminus: Anhydro-N-acetylmuramic acid kinase (375 aa).

Position 19–26 (19–26 (GTSLDGVD)) interacts with ATP.

Belongs to the anhydro-N-acetylmuramic acid kinase family.

It carries out the reaction 1,6-anhydro-N-acetyl-beta-muramate + ATP + H2O = N-acetyl-D-muramate 6-phosphate + ADP + H(+). Its pathway is amino-sugar metabolism; 1,6-anhydro-N-acetylmuramate degradation. It functions in the pathway cell wall biogenesis; peptidoglycan recycling. Functionally, catalyzes the specific phosphorylation of 1,6-anhydro-N-acetylmuramic acid (anhMurNAc) with the simultaneous cleavage of the 1,6-anhydro ring, generating MurNAc-6-P. Is required for the utilization of anhMurNAc either imported from the medium or derived from its own cell wall murein, and thus plays a role in cell wall recycling. This chain is Anhydro-N-acetylmuramic acid kinase, found in Ruegeria sp. (strain TM1040) (Silicibacter sp.).